We begin with the raw amino-acid sequence, 248 residues long: Histone H1, gonadal (248 aa).

Disordered regions lie at residues 1–46 (PGSP…PPVL) and 115–248 (AVAK…KARK). Basic residues predominate over residues 9–39 (ASPRKSPRKSPKKSPRKASASPRRKAKRARA). The H15 domain maps to 41–115 (THPPVLEMVQ…GASGRFRVGA (75 aa)). Positions 118–248 (KPKKAKKTSA…KRRSPKKARK (131 aa)) are enriched in basic residues.

The protein belongs to the histone H1/H5 family. Sperm.

The protein resides in the nucleus. It is found in the chromosome. Histones H1 are necessary for the condensation of nucleosome chains into higher-order structures. The polypeptide is Histone H1, gonadal (Parechinus angulosus (Angulate sea urchin)).